The following is a 257-amino-acid chain: MTQHSRDTPQFYLTAPSPCPYLPGRHERKVFTHLVGNKAGELNDLLTHGGFRRSQSIAYRPACDQCRSCVSVRVVANEFRTSRNQRKILARNADIVGEQRNPVPTSEQYSVFRAYLDQRHRHGGMADMTVLDYAMMVEDSHVETRIIEYRKRTPDTGITGRGGDLIAAALTDVLGDGLSMVYSFYEPGEQNRSLGTFMILDHIARARRLGLPYVYLGYWIEGSKKMDYKGRYLPQQRLASSGWIRIDASGEHPEPQD.

This sequence belongs to the R-transferase family. Bpt subfamily.

It is found in the cytoplasm. The catalysed reaction is N-terminal L-glutamyl-[protein] + L-leucyl-tRNA(Leu) = N-terminal L-leucyl-L-glutamyl-[protein] + tRNA(Leu) + H(+). It carries out the reaction N-terminal L-aspartyl-[protein] + L-leucyl-tRNA(Leu) = N-terminal L-leucyl-L-aspartyl-[protein] + tRNA(Leu) + H(+). Functions in the N-end rule pathway of protein degradation where it conjugates Leu from its aminoacyl-tRNA to the N-termini of proteins containing an N-terminal aspartate or glutamate. This chain is Aspartate/glutamate leucyltransferase, found in Rhodopseudomonas palustris (strain HaA2).